The chain runs to 308 residues: Microtubule integrity protein mal3 (308 aa).

The 102-residue stretch at 2 to 103 folds into the Calponin-homology (CH) domain; that stretch reads SESRQELLAW…FVQWAKRFWD (102 aa). The disordered stretch occupies residues 117-162; the sequence is RGNRGPANTRVMNSSAGATGPSRRRQVSSGSSTPSMTKSSANNNNV. Residues 144-162 show a composition bias toward low complexity; the sequence is SSGSSTPSMTKSSANNNNV. The EB1 C-terminal domain occupies 173 to 247; sequence RAKQAQQQIT…LYSTEDGFEL (75 aa).

The protein belongs to the MAPRE family. As to quaternary structure, interacts with tea2.

The protein resides in the cytoplasm. The protein localises to the cytoskeleton. Functionally, may play a role in regulating the integrity of microtubules possibly by influencing their stability. Involved in an anchoring mechanism to maintain tea2 and tip1 at growing microtubule ends. Strongly stimulates the ATPase activity of tea2. This chain is Microtubule integrity protein mal3 (mal3), found in Schizosaccharomyces pombe (strain 972 / ATCC 24843) (Fission yeast).